Reading from the N-terminus, the 1178-residue chain is Autophagy-related protein 11 (1178 aa).

2 coiled-coil regions span residues 538–572 and 696–850; these read EDEEDENENSIANYRQDLVKVSQAIDNYMTQIKET and SQAN…SYAE.

It belongs to the ATG11 family. In terms of assembly, homodimer and potential homooligomers. Interacts with ATG1 kinase. Interacts with the ATG19 cargo protein transporter. Interacts with the ATG34 cargo protein transporter. Interacts with ATG9. Interacts with ATG17. Interacts with ATG20. Interacts with ATG30. Interacts with ATG32; to recruit ATG11 to mitochondria. Interacts with ATG36. Interacts with YPT1. Acetylated by the NuA4 histone acetyltransferase (HAT) complex.

It is found in the preautophagosomal structure membrane. The protein resides in the vacuole membrane. Functionally, involved in cytoplasm to vacuole transport (Cvt), pexophagy, mitophagy and nucleophagy. Recruits mitochondria for their selective degradation via autophagy (mitophagy) during starvation, through its interaction with ATG32. Works as scaffold proteins that recruit ATG proteins to the pre-autophagosome (PAS), the site of vesicle/autophagosome formation. Required for ATG9 anterograde transport from the mitochondria to the PAS. Also recruits the ATG19-prAPE1 complex to the PAS. Required for the Cvt vesicles completion. Plays a significant role in life span extension. The protein is Autophagy-related protein 11 (ATG11) of Saccharomyces cerevisiae (strain ATCC 204508 / S288c) (Baker's yeast).